Reading from the N-terminus, the 161-residue chain is Protein-export protein SecB (161 aa).

The protein belongs to the SecB family. Homotetramer, a dimer of dimers. One homotetramer interacts with 1 SecA dimer.

The protein resides in the cytoplasm. One of the proteins required for the normal export of preproteins out of the cell cytoplasm. It is a molecular chaperone that binds to a subset of precursor proteins, maintaining them in a translocation-competent state. It also specifically binds to its receptor SecA. The protein is Protein-export protein SecB of Shewanella putrefaciens (strain CN-32 / ATCC BAA-453).